The sequence spans 420 residues: Serine hydroxymethyltransferase (420 aa).

(6S)-5,6,7,8-tetrahydrofolate-binding positions include Leu-121 and 125-127; that span reads GHL. Lys-230 carries the N6-(pyridoxal phosphate)lysine modification. (6S)-5,6,7,8-tetrahydrofolate contacts are provided by residues Glu-246 and 354–356; that span reads SPF.

The protein belongs to the SHMT family. Homodimer. Requires pyridoxal 5'-phosphate as cofactor.

It localises to the cytoplasm. The catalysed reaction is (6R)-5,10-methylene-5,6,7,8-tetrahydrofolate + glycine + H2O = (6S)-5,6,7,8-tetrahydrofolate + L-serine. It functions in the pathway one-carbon metabolism; tetrahydrofolate interconversion. It participates in amino-acid biosynthesis; glycine biosynthesis; glycine from L-serine: step 1/1. In terms of biological role, catalyzes the reversible interconversion of serine and glycine with tetrahydrofolate (THF) serving as the one-carbon carrier. This reaction serves as the major source of one-carbon groups required for the biosynthesis of purines, thymidylate, methionine, and other important biomolecules. Also exhibits THF-independent aldolase activity toward beta-hydroxyamino acids, producing glycine and aldehydes, via a retro-aldol mechanism. This is Serine hydroxymethyltransferase from Rickettsia massiliae (strain Mtu5).